The primary structure comprises 276 residues: Glutamate 5-kinase (276 aa).

An ATP-binding site is contributed by K14. Residues S54, D141, and N157 each coordinate substrate. Residues 177–178 (SD) and 219–225 (TGGMLTK) contribute to the ATP site.

The protein belongs to the glutamate 5-kinase family.

It localises to the cytoplasm. It carries out the reaction L-glutamate + ATP = L-glutamyl 5-phosphate + ADP. The protein operates within amino-acid biosynthesis; L-proline biosynthesis; L-glutamate 5-semialdehyde from L-glutamate: step 1/2. Functionally, catalyzes the transfer of a phosphate group to glutamate to form L-glutamate 5-phosphate. In Listeria monocytogenes serotype 4a (strain HCC23), this protein is Glutamate 5-kinase.